The following is a 205-amino-acid chain: Proteasome subunit beta type-3 (205 aa).

Residue S2 is modified to N-acetylserine. Residue K77 is modified to N6-acetyllysine.

Belongs to the peptidase T1B family. The 26S proteasome consists of a 20S proteasome core and two 19S regulatory subunits. The 20S proteasome core is a barrel-shaped complex made of 28 subunits that are arranged in four stacked rings. The two outer rings are each formed by seven alpha subunits, and the two inner rings are formed by seven beta subunits. The proteolytic activity is exerted by three beta-subunits PSMB5, PSMB6 and PSMB7.

The protein localises to the cytoplasm. It localises to the nucleus. In terms of biological role, non-catalytic component of the 20S core proteasome complex involved in the proteolytic degradation of most intracellular proteins. This complex plays numerous essential roles within the cell by associating with different regulatory particles. Associated with two 19S regulatory particles, forms the 26S proteasome and thus participates in the ATP-dependent degradation of ubiquitinated proteins. The 26S proteasome plays a key role in the maintenance of protein homeostasis by removing misfolded or damaged proteins that could impair cellular functions, and by removing proteins whose functions are no longer required. Associated with the PA200 or PA28, the 20S proteasome mediates ubiquitin-independent protein degradation. This type of proteolysis is required in several pathways including spermatogenesis (20S-PA200 complex) or generation of a subset of MHC class I-presented antigenic peptides (20S-PA28 complex). In Rattus norvegicus (Rat), this protein is Proteasome subunit beta type-3 (Psmb3).